The primary structure comprises 342 residues: GTPase Obg (342 aa).

The Obg domain maps to 1 to 159; it reads MKFLDLCKVY…RTIWLRLKLI (159 aa). One can recognise an OBG-type G domain in the interval 160-327; sequence ADAGLLGLPN…VLRALWAEID (168 aa). GTP is bound by residues 166-173, 191-195, 212-215, 279-282, and 308-310; these read GLPNAGKS, FTTLV, DIPG, NKID, and SGV. Residues Ser173 and Thr193 each contribute to the Mg(2+) site.

It belongs to the TRAFAC class OBG-HflX-like GTPase superfamily. OBG GTPase family. Monomer. Requires Mg(2+) as cofactor.

It is found in the cytoplasm. Its function is as follows. An essential GTPase which binds GTP, GDP and possibly (p)ppGpp with moderate affinity, with high nucleotide exchange rates and a fairly low GTP hydrolysis rate. Plays a role in control of the cell cycle, stress response, ribosome biogenesis and in those bacteria that undergo differentiation, in morphogenesis control. The protein is GTPase Obg of Cereibacter sphaeroides (strain ATCC 17029 / ATH 2.4.9) (Rhodobacter sphaeroides).